The sequence spans 263 residues: Small ribosomal subunit protein eS4 (263 aa).

An S4 RNA-binding domain is found at 42–104 (LPLIVFLRNR…TGEHFRLVYD (63 aa)).

The protein belongs to the eukaryotic ribosomal protein eS4 family.

This is Small ribosomal subunit protein eS4 (RPS4Y1) from Gorilla gorilla gorilla (Western lowland gorilla).